Consider the following 397-residue polypeptide: MSESVHTNTSLWSKGMKAVIVAQFLSAFGDNALLFATLALLKAQFYPEWSQPILQMVFVGAYILFAPFVGQVADSFAKGRVMMFANGLKLLGAASICFGINPFLGYTLVGVGAAAYSPAKYGILGELTTGSKLVKANGLMEASTIAAILLGSVAGGVLADWHILVALVACALAYGGAVVANIYIPKLAAARPGQSWNLISMTRSFLNACTSLWRNGETRFSLVGTSLFWGAGVTLRFLLVLWVPVALGITDNATPTYLNAMVAIGIVVGAGAAAKLVTLETVSRCMPAGILIGVVVLIFSLQHELLPAYALLMLIGVLGGFFVVPLNALLQERGKKSVGAGNAIAVQNLGENSAMLLMLGIYSLAVMVGIPVVPIGIGFGALFALAITALWIWQRRH.

The Periplasmic portion of the chain corresponds to 1–17 (MSESVHTNTSLWSKGMK). Residues 18–38 (AVIVAQFLSAFGDNALLFATL) traverse the membrane as a helical segment. At 39–52 (ALLKAQFYPEWSQP) the chain is on the cytoplasmic side. A helical transmembrane segment spans residues 53 to 73 (ILQMVFVGAYILFAPFVGQVA). The Periplasmic segment spans residues 74 to 90 (DSFAKGRVMMFANGLKL). Residues 91–111 (LGAASICFGINPFLGYTLVGV) form a helical membrane-spanning segment. The Cytoplasmic segment spans residues 112–144 (GAAAYSPAKYGILGELTTGSKLVKANGLMEAST). A helical transmembrane segment spans residues 145 to 165 (IAAILLGSVAGGVLADWHILV). Residue Ala-166 is a topological domain, periplasmic. Residues 167 to 187 (LVACALAYGGAVVANIYIPKL) traverse the membrane as a helical segment. Residues 188–226 (AAARPGQSWNLISMTRSFLNACTSLWRNGETRFSLVGTS) are Cytoplasmic-facing. The chain crosses the membrane as a helical span at residues 227 to 247 (LFWGAGVTLRFLLVLWVPVAL). Residues 248–256 (GITDNATPT) lie on the Periplasmic side of the membrane. The chain crosses the membrane as a helical span at residues 257–277 (YLNAMVAIGIVVGAGAAAKLV). Residues 278-280 (TLE) lie on the Cytoplasmic side of the membrane. The helical transmembrane segment at 281 to 301 (TVSRCMPAGILIGVVVLIFSL) threads the bilayer. At 302-304 (QHE) the chain is on the periplasmic side. A helical membrane pass occupies residues 305-325 (LLPAYALLMLIGVLGGFFVVP). Residues 326–343 (LNALLQERGKKSVGAGNA) are Cytoplasmic-facing. A helical transmembrane segment spans residues 344 to 364 (IAVQNLGENSAMLLMLGIYSL). The Periplasmic portion of the chain corresponds to 365-366 (AV). The chain crosses the membrane as a helical span at residues 367–387 (MVGIPVVPIGIGFGALFALAI). At 388–397 (TALWIWQRRH) the chain is on the cytoplasmic side.

The protein belongs to the major facilitator superfamily. LplT (TC 2.A.1.42) family.

The protein localises to the cell inner membrane. Its function is as follows. Catalyzes the facilitated diffusion of 2-acyl-glycero-3-phosphoethanolamine (2-acyl-GPE) into the cell. The polypeptide is Lysophospholipid transporter LplT (Escherichia coli O81 (strain ED1a)).